The following is a 305-amino-acid chain: PI protein (305 aa).

It belongs to the initiator RepB protein family. Homodimer.

Initiation for plasmid R6K DNA replication. The sequence is that of PI protein (pir) from Escherichia coli.